An 812-amino-acid polypeptide reads, in one-letter code: Ribonucleoside-diphosphate reductase large subunit (812 aa).

Residues 12–103 (LYVIKRDGRQ…VSNLHKETKK (92 aa)) form the ATP-cone domain. ATP is bound by residues 16 to 17 (KR), 22 to 28 (EEVHFDK), threonine 64, and aspartate 68. GDP is bound by residues serine 213 and serine 228. A disulfide bridge connects residues cysteine 229 and cysteine 455. DTTP is bound by residues 237–239 (DSI), lysine 254, arginine 267, and 274–275 (CG). Position 438 (asparagine 438) interacts with GDP. Asparagine 438 (proton acceptor) is an active-site residue. Cysteine 440 acts as the Cysteine radical intermediate in catalysis. Residues glutamate 442 and 615-618 (TAST) contribute to the GDP site. Catalysis depends on glutamate 442, which acts as the Proton acceptor. Threonine 778 is subject to Phosphothreonine. Position 782 is a phosphoserine (serine 782). Residue tyrosine 786 is modified to Phosphotyrosine.

It belongs to the ribonucleoside diphosphate reductase large chain family. As to quaternary structure, heterodimer of a large and a small subunit.

It catalyses the reaction a 2'-deoxyribonucleoside 5'-diphosphate + [thioredoxin]-disulfide + H2O = a ribonucleoside 5'-diphosphate + [thioredoxin]-dithiol. With respect to regulation, under complex allosteric control mediated by deoxynucleoside triphosphates and ATP binding to separate specificity and activation sites on the M1 subunit. The type of nucleotide bound at the specificity site determines substrate preference. It seems probable that ATP makes the enzyme reduce CDP and UDP, dGTP favors ADP reduction and dTTP favors GDP reduction. Stimulated by ATP and inhibited by dATP binding to the activity site. Functionally, provides the precursors necessary for DNA synthesis. Catalyzes the biosynthesis of deoxyribonucleotides from the corresponding ribonucleotides. This Drosophila melanogaster (Fruit fly) protein is Ribonucleoside-diphosphate reductase large subunit (RnrL).